Consider the following 652-residue polypeptide: Phosphatidylinositol-binding clathrin assembly protein (652 aa).

Ser2 bears the N-acetylserine mark. An ENTH domain is found at 14–145 (QHSVTGSAVS…VSYRQVAFDF (132 aa)). Residues Ser16 and Ser20 each carry the phosphoserine modification. The interval 221–294 (KYFDMKKNQC…LEGKKIKDST (74 aa)) is interaction with PIMREG. Residue Lys238 forms a Glycyl lysine isopeptide (Lys-Gly) (interchain with G-Cter in SUMO2) linkage. 2 positions are modified to phosphoserine: Ser303 and Ser315. A disordered region spans residues 559 to 580 (KNDVNWSQPGEKKLTGGSNWQP).

The protein belongs to the PICALM/SNAP91 family. In terms of assembly, binds to clathrin; involves primarily the C-terminal sequences, but the full-length protein is required for full binding capacity. Binds phosphatidylinositol 4,5- bisphosphate. Interacts with PIMREG; this interaction may change the subcellular location into the nucleus. Interacts with AP2A1 (via its alpha-appendage domain). Interacts (via N-terminus) with VAMP2; VAMP3; VAMP7 and VAMP8 (Via N-terminus). Interacts with LC3/MAP1LC3A. Expressed in all tissues examined.

It is found in the cell membrane. It localises to the membrane. The protein resides in the clathrin-coated pit. Its subcellular location is the golgi apparatus. The protein localises to the cytoplasmic vesicle. It is found in the clathrin-coated vesicle. It localises to the nucleus. Functionally, cytoplasmic adapter protein that plays a critical role in clathrin-mediated endocytosis which is important in processes such as internalization of cell receptors, synaptic transmission or removal of apoptotic cells. Recruits AP-2 and attaches clathrin triskelions to the cytoplasmic side of plasma membrane leading to clathrin-coated vesicles (CCVs) assembly. Furthermore, regulates clathrin-coated vesicle size and maturation by directly sensing and driving membrane curvature. In addition to binding to clathrin, mediates the endocytosis of small R-SNARES (Soluble NSF Attachment Protein REceptors) between plasma membranes and endosomes including VAMP2, VAMP3, VAMP4, VAMP7 or VAMP8. In turn, PICALM-dependent SNARE endocytosis is required for the formation and maturation of autophagic precursors. Modulates thereby autophagy and the turnover of autophagy substrates such as MAPT/TAU or amyloid precursor protein cleaved C-terminal fragment (APP-CTF). The polypeptide is Phosphatidylinositol-binding clathrin assembly protein (PICALM) (Homo sapiens (Human)).